The chain runs to 326 residues: Protein-ribulosamine 3-kinase, chloroplastic (326 aa).

The transit peptide at 1–30 directs the protein to the chloroplast; the sequence is MAVASLSICFSARPHLLLRNFSPRPKFVAM. 125–127 lines the ATP pocket; sequence EFI. The Proton acceptor role is filled by D230.

It belongs to the fructosamine kinase family.

The protein resides in the plastid. It localises to the chloroplast. It catalyses the reaction N(6)-D-ribulosyl-L-lysyl-[protein] + ATP = N(6)-(3-O-phospho-D-ribulosyl)-L-lysyl-[protein] + ADP + H(+). The catalysed reaction is N(6)-(D-erythrulosyl)-L-lysyl-[protein] + ATP = N(6)-(3-O-phospho-D-erythrulosyl)-L-lysyl-[protein] + ADP + H(+). Functionally, initiates a process leading to the deglycation of proteins. Phosphorylates low-molecular-mass and protein-bound erythrulosamines and ribulosamines, but not fructosamines or psicosamines, on the third carbon of the sugar moiety. Protein-bound erythrulosamine 3-phosphates and ribulosamine 3-phosphates are unstable and decompose under physiological conditions. The protein is Protein-ribulosamine 3-kinase, chloroplastic of Arabidopsis thaliana (Mouse-ear cress).